Here is a 208-residue protein sequence, read N- to C-terminus: Ribonuclease HII (208 aa).

Residues 17–208 enclose the RNase H type-2 domain; the sequence is LRVCGIDEAG…SFRLRQLGEK (192 aa). Positions 23, 24, and 120 each coordinate a divalent metal cation.

It belongs to the RNase HII family. It depends on Mn(2+) as a cofactor. Mg(2+) is required as a cofactor.

Its subcellular location is the cytoplasm. The catalysed reaction is Endonucleolytic cleavage to 5'-phosphomonoester.. In terms of biological role, endonuclease that specifically degrades the RNA of RNA-DNA hybrids. The polypeptide is Ribonuclease HII (Chlorobium luteolum (strain DSM 273 / BCRC 81028 / 2530) (Pelodictyon luteolum)).